The primary structure comprises 250 residues: Hydroxyethylthiazole kinase (250 aa).

Residue Met39 coordinates substrate. Positions 114 and 159 each coordinate ATP. Gly186 lines the substrate pocket.

This sequence belongs to the Thz kinase family. Mg(2+) serves as cofactor.

The catalysed reaction is 5-(2-hydroxyethyl)-4-methylthiazole + ATP = 4-methyl-5-(2-phosphooxyethyl)-thiazole + ADP + H(+). It functions in the pathway cofactor biosynthesis; thiamine diphosphate biosynthesis; 4-methyl-5-(2-phosphoethyl)-thiazole from 5-(2-hydroxyethyl)-4-methylthiazole: step 1/1. Catalyzes the phosphorylation of the hydroxyl group of 4-methyl-5-beta-hydroxyethylthiazole (THZ). This chain is Hydroxyethylthiazole kinase, found in Lactococcus lactis subsp. cremoris (strain MG1363).